We begin with the raw amino-acid sequence, 439 residues long: Maintenance of mitochondrial morphology protein 1 (439 aa).

Over 1-76 the chain is Lumenal; it reads MSQDLIETTA…NGNTWSFTQG (76 aa). A helical membrane pass occupies residues 77-97; sequence LVIGQVSVIFIIIVFVKFFVF. Residues 98 to 439 are Cytoplasmic-facing; that stretch reads ADSSSHIPTK…TPGEYVNSNI (342 aa). 3 disordered regions span residues 125–145, 309–336, and 405–425; these read KHSNGQFANDGENEDDTSLDS, MNGYSKENANGDGASSSNNDEDEDDGGT, and REPVTKKTTTTPSTTVNGTSA. The 231-residue stretch at 165–395 folds into the SMP-LTD domain; it reads ASESLDWFNV…EPRFQVVRLP (231 aa). 2 stretches are compositionally biased toward low complexity: residues 315–326 and 410–424; these read ENANGDGASSSN and KKTTTTPSTTVNGTS.

It belongs to the MMM1 family. In terms of assembly, homodimer. Component of the ER-mitochondria encounter structure (ERMES) or MDM complex, composed of MMM1, MDM10, MDM12 and MDM34. An MMM1 homodimer associates with one molecule of MDM12 on each side in a pairwise head-to-tail manner, and the SMP-LTD domains of MMM1 and MDM12 generate a continuous hydrophobic tunnel for phospholipid trafficking.

Its subcellular location is the endoplasmic reticulum membrane. In terms of biological role, component of the ERMES/MDM complex, which serves as a molecular tether to connect the endoplasmic reticulum (ER) and mitochondria. Components of this complex are involved in the control of mitochondrial shape and protein biogenesis, and function in nonvesicular lipid trafficking between the ER and mitochondria. The MDM12-MMM1 subcomplex functions in the major beta-barrel assembly pathway that is responsible for biogenesis of all outer membrane beta-barrel proteins, and acts in a late step after the SAM complex. The MDM10-MDM12-MMM1 subcomplex further acts in the TOM40-specific pathway after the action of the MDM12-MMM1 complex. Essential for establishing and maintaining the structure of mitochondria and maintenance of mtDNA nucleoids. The polypeptide is Maintenance of mitochondrial morphology protein 1 (Candida albicans (strain SC5314 / ATCC MYA-2876) (Yeast)).